Reading from the N-terminus, the 494-residue chain is BUB3-interacting and GLEBS motif-containing protein ZNF207 (494 aa).

Residues 1–92 form a microtubule-binding region region; it reads MGRKKKKQLK…EGIPEKDMDE (92 aa). C2H2-type zinc fingers lie at residues 11–34 and 35–58; these read PWCW…KAKH and FKCH…MQVH. Over residues 100 to 111 the composition is skewed to basic and acidic residues; it reads KTQESQKKKQQD. Disordered regions lie at residues 100–161, 250–377, and 455–494; these read KTQE…PGIP, NRPP…SATS, and LPGA…GGRY. Over residues 112–121 the composition is skewed to acidic residues; the sequence is DSDEYDDDDS. The segment covering 127–136 has biased composition (polar residues); sequence FQPQPVQPQQ. Over residues 142-161 the composition is skewed to pro residues; it reads MAQPGLPPVPGAPGMPPGIP. Low complexity predominate over residues 283–300; that stretch reads SSSTASSNSESLSASSKA. Polar residues predominate over residues 323 to 332; it reads LNSTPATSTE. Low complexity predominate over residues 342 to 377; the sequence is TQSTASTTSTTNSTAAKPAASITSKPATLTTTSATS. The segment at 375–407 is GLEBS; that stretch reads ATSKLIHPDEDISLEERRAQLPKYQRNLPRPGQ. The span at 463–483 shows a compositional bias: pro residues; the sequence is GQGPPMVPPYQGGPPRPPMGM.

As to quaternary structure, interacts (via GLEBS region) with BUB3.

It is found in the nucleus. It localises to the chromosome. Its subcellular location is the centromere. The protein localises to the kinetochore. The protein resides in the cytoplasm. It is found in the cytoskeleton. It localises to the spindle. In terms of biological role, kinetochore- and microtubule-binding protein that plays a key role in spindle assembly. ZNF207/BuGZ is mainly composed of disordered low-complexity regions and undergoes phase transition or coacervation to form temperature-dependent liquid droplets. Coacervation promotes microtubule bundling and concentrates tubulin, promoting microtubule polymerization and assembly of spindle and spindle matrix by concentrating its building blocks. Also acts as a regulator of mitotic chromosome alignment by mediating the stability and kinetochore loading of BUB3. Mechanisms by which BUB3 is protected are unclear: according to a first report, ZNF207/BuGZ may act by blocking ubiquitination and proteasomal degradation of BUB3. According to another report, the stabilization is independent of the proteasome. This Pongo abelii (Sumatran orangutan) protein is BUB3-interacting and GLEBS motif-containing protein ZNF207.